Consider the following 625-residue polypeptide: Chaperone protein HtpG (625 aa).

The tract at residues 1–339 (MNKQTLSFQA…SSDLPLNVSR (339 aa)) is a; substrate-binding. Residues 340–557 (ELLQESRDVK…DGDISGHLAR (218 aa)) are b. The tract at residues 558–625 (LLKQAGQSAP…YVQRVNRLLV (68 aa)) is c.

This sequence belongs to the heat shock protein 90 family. In terms of assembly, homodimer.

The protein localises to the cytoplasm. Its function is as follows. Molecular chaperone. Has ATPase activity. This Methylibium petroleiphilum (strain ATCC BAA-1232 / LMG 22953 / PM1) protein is Chaperone protein HtpG.